We begin with the raw amino-acid sequence, 160 residues long: MNDDKTERPVKTANQRGAARLAAVQALYQMDVGGTGVLEIVAEYEAHRLGQELDGATYLKADAGWFRSIVSGVVRDQTRLDPLIAAALQDDWALSRLDSTVRAILRAGVFEITDRKDVPVAVIVTEYVEIAQAFFDDDEPKLVNAVLDRIAKQVRGETKK.

Belongs to the NusB family.

Its function is as follows. Involved in transcription antitermination. Required for transcription of ribosomal RNA (rRNA) genes. Binds specifically to the boxA antiterminator sequence of the ribosomal RNA (rrn) operons. This Rhizobium leguminosarum bv. trifolii (strain WSM2304) protein is Transcription antitermination protein NusB.